The following is a 580-amino-acid chain: Guanine nucleotide-binding protein alpha-4 subunit (580 aa).

The span at 1 to 10 (MSPSVSSPQL) shows a compositional bias: polar residues. The segment at 1–28 (MSPSVSSPQLRHTKSNRAISRIDRTDPL) is disordered. The region spanning 93–579 (RVYKMVLLGQ…RENLKLTGLV (487 aa)) is the G-alpha domain. The G1 motif stretch occupies residues 96-109 (KMVLLGQAGAGKTT). Residue 101–108 (GQAGAGKT) coordinates GTP. Disordered regions lie at residues 160 to 196 (KSSE…PNDA) and 302 to 325 (GRAA…KDNS). The segment covering 167-183 (LESSTSASTSTSASASS) has biased composition (low complexity). Positions 387–395 (DILHSRVRT) are G2 motif. GTP-binding positions include 389-395 (LHSRVRT), 415-419 (DVGGS), 484-487 (NKID), and Ala-551. Mg(2+) is bound at residue Thr-395. The segment at 411–420 (YRIYDVGGSR) is G3 motif. Residues 480-487 (ILFLNKID) form a G4 motif region. Residues 549 to 554 (TVATST) form a G5 motif region.

It belongs to the G-alpha family. As to quaternary structure, g proteins are composed of 3 units; alpha, beta and gamma. The alpha chain contains the guanine nucleotide binding site.

Its function is as follows. Guanine nucleotide-binding proteins (G proteins) are involved as modulators or transducers in various transmembrane signaling systems. This Mycosarcoma maydis (Corn smut fungus) protein is Guanine nucleotide-binding protein alpha-4 subunit (GPA4).